A 391-amino-acid chain; its full sequence is Formate-dependent phosphoribosylglycinamide formyltransferase (391 aa).

Residues 20–21 (EL) and Glu80 each bind N(1)-(5-phospho-beta-D-ribosyl)glycinamide. ATP-binding positions include Arg112, Lys153, 158-163 (SSGKGQ), 193-196 (EGFI), and Glu201. One can recognise an ATP-grasp domain in the interval 117–306 (RLAAETLGLP…EFALHVRAIL (190 aa)). Residues Glu265 and Glu277 each contribute to the Mg(2+) site. N(1)-(5-phospho-beta-D-ribosyl)glycinamide-binding positions include Asp284, Lys354, and 361-362 (RR).

The protein belongs to the PurK/PurT family. As to quaternary structure, homodimer.

The enzyme catalyses N(1)-(5-phospho-beta-D-ribosyl)glycinamide + formate + ATP = N(2)-formyl-N(1)-(5-phospho-beta-D-ribosyl)glycinamide + ADP + phosphate + H(+). It participates in purine metabolism; IMP biosynthesis via de novo pathway; N(2)-formyl-N(1)-(5-phospho-D-ribosyl)glycinamide from N(1)-(5-phospho-D-ribosyl)glycinamide (formate route): step 1/1. Functionally, involved in the de novo purine biosynthesis. Catalyzes the transfer of formate to 5-phospho-ribosyl-glycinamide (GAR), producing 5-phospho-ribosyl-N-formylglycinamide (FGAR). Formate is provided by PurU via hydrolysis of 10-formyl-tetrahydrofolate. This Shewanella sp. (strain ANA-3) protein is Formate-dependent phosphoribosylglycinamide formyltransferase.